The chain runs to 164 residues: Protein phosphatase 1 regulatory subunit 14C (164 aa).

Over residues M1 to A19 the composition is skewed to gly residues. Residues M1–K70 form a disordered region. N-acetylserine is present on S2. S25 is modified (phosphoserine). Omega-N-methylarginine is present on R27. S33 bears the Phosphoserine mark. The span at V50–Q62 shows a compositional bias: low complexity. T72 is subject to Phosphothreonine; by ILK1.

The protein belongs to the PP1 inhibitor family. In terms of processing, the main inhibitory site appears to be Thr-72. Has over 600-fold higher inhibitory activity when phosphorylated, creating a molecular switch for regulating the phosphorylation status of PPP1CA substrates and smooth muscle contraction. As to expression, detected in heart, muscle, spinal cord, hippocampus, hypothalamus, thalamus, midbrain, brain stem, cerebellum, brain cortex and olfactory bulb.

Its subcellular location is the endomembrane system. In terms of biological role, inhibitor of the PP1 regulatory subunit PPP1CA. In Mus musculus (Mouse), this protein is Protein phosphatase 1 regulatory subunit 14C (Ppp1r14c).